A 293-amino-acid chain; its full sequence is N-acetylneuraminate lyase (293 aa).

Residues S48 and S49 each contribute to the aceneuramate site. Y137 (proton donor) is an active-site residue. The Schiff-base intermediate with substrate role is filled by K165. Aceneuramate contacts are provided by T167, G189, D191, E192, and S208.

The protein belongs to the DapA family. NanA subfamily. Homotetramer.

The protein localises to the cytoplasm. It catalyses the reaction aceneuramate = aldehydo-N-acetyl-D-mannosamine + pyruvate. Its pathway is amino-sugar metabolism; N-acetylneuraminate degradation; D-fructose 6-phosphate from N-acetylneuraminate: step 1/5. Catalyzes the reversible aldol cleavage of N-acetylneuraminic acid (sialic acid; Neu5Ac) to form pyruvate and N-acetylmannosamine (ManNAc) via a Schiff base intermediate. This chain is N-acetylneuraminate lyase, found in Staphylococcus aureus (strain MRSA252).